The chain runs to 215 residues: Translation initiation factor IF-3 (215 aa).

The segment at 159–215 is disordered; it reads SAEVQQPPKREGRNMIMFLGPRKTPLQKDKPEQATKAERTLPIAKPPGKTAAPAAAN. The segment covering 184–197 has biased composition (basic and acidic residues); sequence LQKDKPEQATKAER. A compositionally biased stretch (low complexity) spans 200–215; it reads PIAKPPGKTAAPAAAN.

Belongs to the IF-3 family. Monomer.

The protein resides in the cytoplasm. In terms of biological role, IF-3 binds to the 30S ribosomal subunit and shifts the equilibrium between 70S ribosomes and their 50S and 30S subunits in favor of the free subunits, thus enhancing the availability of 30S subunits on which protein synthesis initiation begins. This chain is Translation initiation factor IF-3, found in Synechococcus sp. (strain RCC307).